A 337-amino-acid chain; its full sequence is Methylthioribose-1-phosphate isomerase (337 aa).

Substrate is bound by residues 51-53 (RGA), R88, and Q187. D228 functions as the Proton donor in the catalytic mechanism. 238 to 239 (NK) contacts substrate.

It belongs to the eIF-2B alpha/beta/delta subunits family. MtnA subfamily.

The enzyme catalyses 5-(methylsulfanyl)-alpha-D-ribose 1-phosphate = 5-(methylsulfanyl)-D-ribulose 1-phosphate. Its pathway is amino-acid biosynthesis; L-methionine biosynthesis via salvage pathway; L-methionine from S-methyl-5-thio-alpha-D-ribose 1-phosphate: step 1/6. Its function is as follows. Catalyzes the interconversion of methylthioribose-1-phosphate (MTR-1-P) into methylthioribulose-1-phosphate (MTRu-1-P). The chain is Methylthioribose-1-phosphate isomerase from Anaeromyxobacter sp. (strain Fw109-5).